A 55-amino-acid chain; its full sequence is Large ribosomal subunit protein bL33 (55 aa).

The protein belongs to the bacterial ribosomal protein bL33 family.

This Bartonella henselae (strain ATCC 49882 / DSM 28221 / CCUG 30454 / Houston 1) (Rochalimaea henselae) protein is Large ribosomal subunit protein bL33.